Here is a 211-residue protein sequence, read N- to C-terminus: Pyridoxine/pyridoxamine 5'-phosphate oxidase (211 aa).

Substrate contacts are provided by residues 7 to 10 (RREY) and Lys65. FMN is bound by residues 60 to 65 (RIVLLK), 75 to 76 (YT), Arg81, Lys82, and Gln104. Substrate is bound by residues Tyr122, Arg126, and Ser130. Residues 139–140 (QS) and Trp184 each bind FMN. 190-192 (RLH) contacts substrate. Position 194 (Arg194) interacts with FMN.

Belongs to the pyridoxamine 5'-phosphate oxidase family. Homodimer. Requires FMN as cofactor.

The enzyme catalyses pyridoxamine 5'-phosphate + O2 + H2O = pyridoxal 5'-phosphate + H2O2 + NH4(+). It carries out the reaction pyridoxine 5'-phosphate + O2 = pyridoxal 5'-phosphate + H2O2. The protein operates within cofactor metabolism; pyridoxal 5'-phosphate salvage; pyridoxal 5'-phosphate from pyridoxamine 5'-phosphate: step 1/1. Its pathway is cofactor metabolism; pyridoxal 5'-phosphate salvage; pyridoxal 5'-phosphate from pyridoxine 5'-phosphate: step 1/1. Catalyzes the oxidation of either pyridoxine 5'-phosphate (PNP) or pyridoxamine 5'-phosphate (PMP) into pyridoxal 5'-phosphate (PLP). The protein is Pyridoxine/pyridoxamine 5'-phosphate oxidase of Vibrio campbellii (strain ATCC BAA-1116).